Reading from the N-terminus, the 352-residue chain is UDP-3-O-acylglucosamine N-acyltransferase (352 aa).

The active-site Proton acceptor is His244.

The protein belongs to the transferase hexapeptide repeat family. LpxD subfamily. Homotrimer.

It catalyses the reaction a UDP-3-O-[(3R)-3-hydroxyacyl]-alpha-D-glucosamine + a (3R)-hydroxyacyl-[ACP] = a UDP-2-N,3-O-bis[(3R)-3-hydroxyacyl]-alpha-D-glucosamine + holo-[ACP] + H(+). The protein operates within bacterial outer membrane biogenesis; LPS lipid A biosynthesis. Functionally, catalyzes the N-acylation of UDP-3-O-acylglucosamine using 3-hydroxyacyl-ACP as the acyl donor. Is involved in the biosynthesis of lipid A, a phosphorylated glycolipid that anchors the lipopolysaccharide to the outer membrane of the cell. This chain is UDP-3-O-acylglucosamine N-acyltransferase, found in Leptospira biflexa serovar Patoc (strain Patoc 1 / Ames).